The following is a 388-amino-acid chain: Oligogalacturonate lyase (388 aa).

The protein resides in the periplasm. The enzyme catalyses 4-(4-deoxy-alpha-D-galact-4-enuronosyl)-D-galacturonate = 2 5-dehydro-4-deoxy-D-glucuronate. It participates in glycan metabolism; pectin degradation; 2-dehydro-3-deoxy-D-gluconate from pectin: step 3/5. Its function is as follows. Involved in degradation of pectin, which causes soft-rod disease in plants. The chain is Oligogalacturonate lyase (ogl) from Dickeya dadantii (strain 3937) (Erwinia chrysanthemi (strain 3937)).